A 199-amino-acid polypeptide reads, in one-letter code: Ras-related protein Rab-7b (199 aa).

Residues 15–22 (GALGVGKT), 34–40 (FEEYQTT), 63–67 (DTGGQ), 124–127 (NKID), and 154–155 (AK) each bind GTP. 2 consecutive short sequence motifs (switch) follow at residues 28 to 41 (YVHKTFFEEYQTTL) and 67 to 82 (QERFRSMVSTFYKGSD). Position 186 is a phosphoserine (Ser186). S-geranylgeranyl cysteine attachment occurs at residues Cys198 and Cys199.

Belongs to the small GTPase superfamily. Rab family.

The protein localises to the late endosome. It is found in the lysosome. Its subcellular location is the golgi apparatus. The protein resides in the trans-Golgi network. It localises to the cytoplasmic vesicle. The protein localises to the phagosome. It is found in the phagosome membrane. Its function is as follows. Controls vesicular trafficking from endosomes to the trans-Golgi network (TGN). Acts as a negative regulator of TLR9 signaling and can suppress TLR9-triggered TNFA, IL6, and IFNB production in macrophages by promoting TLR9 lysosomal degradation. Also negatively regulates TLR4 signaling in macrophages by promoting lysosomal degradation of TLR4. Promotes megakaryocytic differentiation by increasing NF-kappa-B-dependent IL6 production and subsequently enhancing the association of STAT3 with GATA1. Not involved in the regulation of the EGF- and EGFR degradation pathway. The protein is Ras-related protein Rab-7b (Rab7b) of Mus musculus (Mouse).